Here is a 373-residue protein sequence, read N- to C-terminus: UDP-N-acetylglucosamine--N-acetylmuramyl-(pentapeptide) pyrophosphoryl-undecaprenol N-acetylglucosamine transferase (373 aa).

UDP-N-acetyl-alpha-D-glucosamine is bound by residues Thr13–Gly15, Asn124, Arg164, Ser192, and Gln293.

Belongs to the glycosyltransferase 28 family. MurG subfamily.

It localises to the cell inner membrane. It catalyses the reaction di-trans,octa-cis-undecaprenyl diphospho-N-acetyl-alpha-D-muramoyl-L-alanyl-D-glutamyl-meso-2,6-diaminopimeloyl-D-alanyl-D-alanine + UDP-N-acetyl-alpha-D-glucosamine = di-trans,octa-cis-undecaprenyl diphospho-[N-acetyl-alpha-D-glucosaminyl-(1-&gt;4)]-N-acetyl-alpha-D-muramoyl-L-alanyl-D-glutamyl-meso-2,6-diaminopimeloyl-D-alanyl-D-alanine + UDP + H(+). The protein operates within cell wall biogenesis; peptidoglycan biosynthesis. Functionally, cell wall formation. Catalyzes the transfer of a GlcNAc subunit on undecaprenyl-pyrophosphoryl-MurNAc-pentapeptide (lipid intermediate I) to form undecaprenyl-pyrophosphoryl-MurNAc-(pentapeptide)GlcNAc (lipid intermediate II). The polypeptide is UDP-N-acetylglucosamine--N-acetylmuramyl-(pentapeptide) pyrophosphoryl-undecaprenol N-acetylglucosamine transferase (Allorhizobium ampelinum (strain ATCC BAA-846 / DSM 112012 / S4) (Agrobacterium vitis (strain S4))).